Consider the following 118-residue polypeptide: V-type proton ATPase subunit G 1 (118 aa).

Ala2 bears the N-acetylalanine mark. The interval 55-90 is disordered; the sequence is FQSKQQAAMGSQGNLSAEVEQATRRQVQGMQSSQQR. Polar residues-rich tracts occupy residues 56-69 and 78-89; these read QSKQ…QGNL and RRQVQGMQSSQQ.

The protein belongs to the V-ATPase G subunit family. In terms of assembly, V-ATPase is a heteromultimeric enzyme made up of two complexes: the ATP-hydrolytic V1 complex and the proton translocation V0 complex. The V1 complex consists of three catalytic AB heterodimers that form a heterohexamer, three peripheral stalks each consisting of EG heterodimers, one central rotor including subunits D and F, and the regulatory subunits C and H. The proton translocation complex V0 consists of the proton transport subunit a, a ring of proteolipid subunits c9c'', rotary subunit d, subunits e and f, and the accessory subunits ATP6AP1/Ac45 and ATP6AP2/PRR.

The protein localises to the apical cell membrane. In terms of biological role, subunit of the V1 complex of vacuolar(H+)-ATPase (V-ATPase), a multisubunit enzyme composed of a peripheral complex (V1) that hydrolyzes ATP and a membrane integral complex (V0) that translocates protons. V-ATPase is responsible for acidifying and maintaining the pH of intracellular compartments and in some cell types, is targeted to the plasma membrane, where it is responsible for acidifying the extracellular environment. In aerobic conditions, involved in intracellular iron homeostasis, thus triggering the activity of Fe(2+) prolyl hydroxylase (PHD) enzymes, and leading to HIF1A hydroxylation and subsequent proteasomal degradation. This chain is V-type proton ATPase subunit G 1 (ATP6V1G1), found in Canis lupus familiaris (Dog).